The chain runs to 448 residues: Immunoglobulin G-binding protein G (448 aa).

The N-terminal stretch at 1–33 (MEKEKKVKYFLRKSAFGLASVSAAFLVGSTVFA) is a signal peptide. 4 tandem repeats follow at residues 104 to 140 (LAKA…IKDL), 179 to 215 (LAEA…VKEL), 228 to 282 (TYKL…TVTE), and 298 to 352 (TYKL…TVTE). Positions 104–215 (LAKAKADALK…AKTVEGVKEL (112 aa)) are 2 X 37 AA repeats. Residues 228 to 352 (TYKLILNGKT…DATKTFTVTE (125 aa)) form a 2 X 55 AA repeats region. The segment at 358 to 422 (PGDAPTEPEK…TLPTTGEGSN (65 aa)) is disordered. The span at 384–412 (AKDDAKKDDTKKEDAKKPEAKKDDAKKAE) shows a compositional bias: basic and acidic residues. The interval 386 to 410 (DDAKKDDTKKEDAKKPEAKKDDAKK) is 5 X 5 AA repeats of [DE]-D-A-K-K. The LPXTG sorting signal motif lies at 414–418 (LPTTG). A Pentaglycyl murein peptidoglycan amidated threonine modification is found at T417. Positions 418–448 (GEGSNPFFTAAALAVMAGAGALAVASKRKED) are cleaved as a propeptide — removed by sortase.

Its subcellular location is the secreted. The protein resides in the cell wall. Functionally, binds to the constant Fc region of IgG with high affinity. The polypeptide is Immunoglobulin G-binding protein G (spg) (Streptococcus sp. group G).